Consider the following 211-residue polypeptide: Protein-L-isoaspartate O-methyltransferase (211 aa).

Ser62 is an active-site residue.

This sequence belongs to the methyltransferase superfamily. L-isoaspartyl/D-aspartyl protein methyltransferase family.

It is found in the cytoplasm. It catalyses the reaction [protein]-L-isoaspartate + S-adenosyl-L-methionine = [protein]-L-isoaspartate alpha-methyl ester + S-adenosyl-L-homocysteine. Functionally, catalyzes the methyl esterification of L-isoaspartyl residues in peptides and proteins that result from spontaneous decomposition of normal L-aspartyl and L-asparaginyl residues. It plays a role in the repair and/or degradation of damaged proteins. The protein is Protein-L-isoaspartate O-methyltransferase of Shewanella baltica (strain OS195).